Reading from the N-terminus, the 282-residue chain is Deoxyribonuclease-1 (282 aa).

The signal sequence occupies residues 1–22 (MRGTRLMGLLLALAGLLQLGLS). N-linked (GlcNAc...) asparagine glycosylation occurs at Asn40. Residue Glu100 is part of the active site. Cysteines 123 and 126 form a disulfide. Residue His156 is part of the active site. An intrachain disulfide couples Cys195 to Cys231.

Belongs to the DNase I family. Ca(2+) serves as cofactor. The cofactor is Mg(2+). In terms of processing, the only differences between the A and B forms and the C and D forms are in the compositions of the carbohydrate bound to Asn-40.

The protein localises to the secreted. Its subcellular location is the zymogen granule. It localises to the nucleus envelope. The enzyme catalyses Endonucleolytic cleavage to 5'-phosphodinucleotide and 5'-phosphooligonucleotide end-products.. Functionally, serum endocuclease secreted into body fluids by a wide variety of exocrine and endocrine organs. Expressed by non-hematopoietic tissues and preferentially cleaves protein-free DNA. Among other functions, seems to be involved in cell death by apoptosis. Binds specifically to G-actin and blocks actin polymerization. Together with DNASE1L3, plays a key role in degrading neutrophil extracellular traps (NETs). NETs are mainly composed of DNA fibers and are released by neutrophils to bind pathogens during inflammation. Degradation of intravascular NETs by DNASE1 and DNASE1L3 is required to prevent formation of clots that obstruct blood vessels and cause organ damage following inflammation. This is Deoxyribonuclease-1 (DNASE1) from Bos taurus (Bovine).